The following is an 85-amino-acid chain: Small ribosomal subunit protein bS20 (85 aa).

The disordered stretch occupies residues 1–25; the sequence is MANIKSAIKRAKLSEERRAHNASIK.

It belongs to the bacterial ribosomal protein bS20 family.

Its function is as follows. Binds directly to 16S ribosomal RNA. This is Small ribosomal subunit protein bS20 from Bacillus anthracis (strain A0248).